We begin with the raw amino-acid sequence, 677 residues long: mRNA 3'-end-processing protein RNA14 (677 aa).

HAT repeat units lie at residues 56–88, 90–124, 138–170, 181–214, 257–289, and 298–330; these read ESYAKVREVYEQFHNTFPFYSPAWTLQLKGELA, DEFETVEKILAQCLSGKLENNDLSLWSTYLDYIRR, VIVKAFQLVMQKCAIFEPKSSSFWNEYLNFLEQ, QRIDMLREFYKKMLCVPFDNLEKMWNRYTQWEQE, RTANKKNIPQPGTSDSNIQQLQIWLNWIKWERE, and MLSQRISYVYKQGIQYMIFSAEMWYDYSMYISE.

Component of the CFIA complex, which is composed of RNA14, RNA15, PCF11 and CLP1. Interacts with FIP1, PFS2, YSH1 and probably also with RNA15. Probably interacts with the phosphorylated CTD domain of RPB1/RNA polymerase II.

The protein resides in the nucleus. The protein localises to the cytoplasm. In terms of biological role, component of the cleavage factor IA (CFIA) complex, which is involved in the endonucleolytic cleavage during polyadenylation-dependent pre-mRNA 3'-end formation and cooperates with the cleavage factor NAB4/CFIB and the cleavage and polyadenylation factor (CPF) complex. The polypeptide is mRNA 3'-end-processing protein RNA14 (RNA14) (Saccharomyces cerevisiae (strain ATCC 204508 / S288c) (Baker's yeast)).